A 262-amino-acid polypeptide reads, in one-letter code: Encapsulin nanocompartment protein Rv1762c (262 aa).

It belongs to the UPF0145 family.

The protein localises to the encapsulin nanocompartment. Its function is as follows. Cargo protein of a type 1 encapsulin nanocompartment possibly involved in protection against oxidative stress. The protein is Encapsulin nanocompartment protein Rv1762c of Mycobacterium tuberculosis (strain ATCC 25618 / H37Rv).